We begin with the raw amino-acid sequence, 730 residues long: Hepatocyte growth factor (730 aa).

The signal sequence occupies residues 1-31; it reads MWVTKLLPLLVLQQLLLHLLLLPVAVPRAEG. Gln-32 carries the pyrrolidone carboxylic acid modification. Residues 37-123 enclose the PAN domain; sequence NTLHEFKKSA…HEFDLYENKD (87 aa). Intrachain disulfides connect Cys-70-Cys-96, Cys-74-Cys-84, Cys-128-Cys-206, Cys-149-Cys-189, Cys-177-Cys-201, Cys-211-Cys-288, Cys-232-Cys-271, and Cys-260-Cys-283. Kringle domains lie at 128–206 and 211–288; these read CIIG…IPQC and CMTC…IKMC. A glycan (N-linked (GlcNAc...) asparagine) is linked at Asn-294. 11 disulfides stabilise this stretch: Cys-305–Cys-383, Cys-326–Cys-365, Cys-354–Cys-377, Cys-391–Cys-469, Cys-412–Cys-452, Cys-440–Cys-464, Cys-487–Cys-606, Cys-519–Cys-535, Cys-614–Cys-681, Cys-644–Cys-660, and Cys-671–Cys-699. 2 consecutive Kringle domains span residues 305–383 and 391–469; these read CIQG…IPKC and CYRG…IFRC. N-linked (GlcNAc...) asparagine glycosylation is present at Asn-402. In terms of domain architecture, Peptidase S1 spans 495–723; it reads VVNGIPTRTN…YAKWIHKIIL (229 aa). 2 N-linked (GlcNAc...) asparagine glycosylation sites follow: Asn-568 and Asn-655.

This sequence belongs to the peptidase S1 family. Plasminogen subfamily. In terms of assembly, dimer of an alpha chain and a beta chain linked by a disulfide bond. Interacts with SRPX2; the interaction increases HGF mitogenic activity. In terms of processing, the single-chain precursor undergoes proteolytic processing by TMPRSS13 resulting in an active two-chain form. The single-chain precursor undergoes proteolytic processing by HGFAC resulting in an active two-chain form.

In terms of biological role, potent mitogen for mature parenchymal hepatocyte cells, seems to be a hepatotrophic factor, and acts as a growth factor for a broad spectrum of tissues and cell types. Activating ligand for the receptor tyrosine kinase MET by binding to it and promoting its dimerization. Activates MAPK signaling following TMPRSS13 cleavage and activation. The chain is Hepatocyte growth factor (HGF) from Canis lupus familiaris (Dog).